We begin with the raw amino-acid sequence, 671 residues long: DNA ligase (671 aa).

NAD(+) is bound by residues aspartate 32 to aspartate 36, serine 81 to leucine 82, and glutamate 113. Catalysis depends on lysine 115, which acts as the N6-AMP-lysine intermediate. The NAD(+) site is built by arginine 136, glutamate 173, lysine 290, and lysine 314. Positions 408, 411, 426, and 432 each coordinate Zn(2+). A BRCT domain is found at glutamate 593–alanine 671.

Belongs to the NAD-dependent DNA ligase family. LigA subfamily. It depends on Mg(2+) as a cofactor. Mn(2+) is required as a cofactor.

The catalysed reaction is NAD(+) + (deoxyribonucleotide)n-3'-hydroxyl + 5'-phospho-(deoxyribonucleotide)m = (deoxyribonucleotide)n+m + AMP + beta-nicotinamide D-nucleotide.. Functionally, DNA ligase that catalyzes the formation of phosphodiester linkages between 5'-phosphoryl and 3'-hydroxyl groups in double-stranded DNA using NAD as a coenzyme and as the energy source for the reaction. It is essential for DNA replication and repair of damaged DNA. The sequence is that of DNA ligase from Salmonella paratyphi B (strain ATCC BAA-1250 / SPB7).